The chain runs to 87 residues: U3-theraphotoxin-Hhn1b (87 aa).

The N-terminal stretch at 1–24 (MVNMKASMFLTFAGLVLLFVVCYA) is a signal peptide. A propeptide spanning residues 25–52 (SESEEKEFPREMLSSIFAVDNDFKQEER) is cleaved from the precursor. 2 disulfide bridges follow: Cys-54/Cys-67 and Cys-61/Cys-72.

Belongs to the neurotoxin 10 (Hwtx-1) family. 51 (Hntx-8) subfamily. Hntx-8 sub-subfamily. As to expression, expressed by the venom gland.

It localises to the secreted. In terms of biological role, ion channel inhibitor. The polypeptide is U3-theraphotoxin-Hhn1b (Cyriopagopus hainanus (Chinese bird spider)).